The sequence spans 265 residues: Homeobox protein engrailed-2-B (265 aa).

Basic and acidic residues-rich tracts occupy residues 1 to 12 (MEENEQNNREVE) and 102 to 115 (GEKKSDLAMEETLK). Disordered regions lie at residues 1-38 (MEENEQNNREVEPQQESGEESNRGILHQAPPGNHQPHH), 60-138 (INHQ…SSKA), and 156-182 (DRPSSGPRSRKPKKKSVSKEDKRPRTA). Residues 122 to 136 (DHSLSSDSDSSQASS) show a composition bias toward low complexity. The homeobox DNA-binding region spans 176 to 235 (DKRPRTAFTAEQLQRLKAEFQTNRYLTEQRRQSLAQELGLNESQIKIWFQNKRAKIKKST).

The protein belongs to the engrailed homeobox family.

It localises to the nucleus. This is Homeobox protein engrailed-2-B (en2-b) from Xenopus laevis (African clawed frog).